The following is a 296-amino-acid chain: Elongation factor Ts (296 aa).

Positions 79-82 (TDFV) are involved in Mg(2+) ion dislocation from EF-Tu.

It belongs to the EF-Ts family.

It is found in the cytoplasm. Functionally, associates with the EF-Tu.GDP complex and induces the exchange of GDP to GTP. It remains bound to the aminoacyl-tRNA.EF-Tu.GTP complex up to the GTP hydrolysis stage on the ribosome. The polypeptide is Elongation factor Ts (Paracoccus denitrificans (strain Pd 1222)).